A 375-amino-acid polypeptide reads, in one-letter code: Growth/differentiation factor 8 (375 aa).

The signal sequence occupies residues 1–23 (MQKLQIYVYIYLFMLIVAGPVDL). The propeptide occupies 24-266 (NENSEQKENV…VTDTPKRSRR (243 aa)). N-linked (GlcNAc...) asparagine glycosylation is present at Asn71. 4 disulfide bridges follow: Cys272/Cys282, Cys281/Cys340, Cys309/Cys372, and Cys313/Cys374.

This sequence belongs to the TGF-beta family. Homodimer; disulfide-linked. Interacts with WFIKKN2, leading to inhibit its activity. Interacts with FSTL3. In terms of processing, synthesized as large precursor molecule that undergoes proteolytic cleavage to generate an N-terminal propeptide and a disulfide linked C-terminal dimer, which is the biologically active molecule. The circulating form consists of a latent complex of the C-terminal dimer and other proteins, including its propeptide, which maintain the C-terminal dimer in a latent, inactive state. Ligand activation requires additional cleavage of the prodomain by a tolloid-like metalloproteinase.

It localises to the secreted. Functionally, acts specifically as a negative regulator of skeletal muscle growth. The sequence is that of Growth/differentiation factor 8 (MSTN) from Sus scrofa (Pig).